We begin with the raw amino-acid sequence, 303 residues long: MTPQELKSILSSGLLSFPVTDFDAAGDFDAESYARRLEWLAPYGASALFAAGGTGEFFSLGLDEYPRIIKTAVDTCAGSVPILAGVGGPTRQAIHMAQEAERLGAKGLLLLPHYLTEASQEGVAAHVEAVCRAVKIGVVVYNRNVCRLTPALLEQLAERCPNLVGYKDGLGEIELMVSVRHRLGERFAYLGGLPTAEVYAAAYKALGVPVYSSAVFNFIPRTAMEFYKAVAADDQVTVGRLIDDFFLPLLEIRNRRAGYAVSIVKAGVRVIGHDAGPVRAPLTDLLPDEYERLAALIRKLGPQ.

It belongs to the DapA family.

It carries out the reaction 5-dehydro-4-deoxy-D-glucarate + H(+) = 2,5-dioxopentanoate + CO2 + H2O. It participates in carbohydrate acid metabolism; D-glucarate degradation; 2,5-dioxopentanoate from D-glucarate: step 2/2. This is Probable 5-dehydro-4-deoxyglucarate dehydratase from Azotobacter vinelandii (strain DJ / ATCC BAA-1303).